Here is a 1075-residue protein sequence, read N- to C-terminus: Error-prone DNA polymerase (1075 aa).

This sequence belongs to the DNA polymerase type-C family. DnaE2 subfamily.

It localises to the cytoplasm. The enzyme catalyses DNA(n) + a 2'-deoxyribonucleoside 5'-triphosphate = DNA(n+1) + diphosphate. Functionally, DNA polymerase involved in damage-induced mutagenesis and translesion synthesis (TLS). It is not the major replicative DNA polymerase. The chain is Error-prone DNA polymerase from Ralstonia nicotianae (strain ATCC BAA-1114 / GMI1000) (Ralstonia solanacearum).